A 37-amino-acid polypeptide reads, in one-letter code: Large ribosomal subunit protein bL36c (37 aa).

The protein belongs to the bacterial ribosomal protein bL36 family.

It localises to the plastid. The protein localises to the chloroplast. This chain is Large ribosomal subunit protein bL36c (rpl36), found in Chlamydomonas reinhardtii (Chlamydomonas smithii).